The following is a 196-amino-acid chain: Imidazoleglycerol-phosphate dehydratase (196 aa).

This sequence belongs to the imidazoleglycerol-phosphate dehydratase family.

Its subcellular location is the cytoplasm. It carries out the reaction D-erythro-1-(imidazol-4-yl)glycerol 3-phosphate = 3-(imidazol-4-yl)-2-oxopropyl phosphate + H2O. Its pathway is amino-acid biosynthesis; L-histidine biosynthesis; L-histidine from 5-phospho-alpha-D-ribose 1-diphosphate: step 6/9. The protein is Imidazoleglycerol-phosphate dehydratase of Caulobacter vibrioides (strain ATCC 19089 / CIP 103742 / CB 15) (Caulobacter crescentus).